The primary structure comprises 548 residues: Chaperone Ric-8A (548 aa).

Disordered regions lie at residues 443–484 (DPGH…EGMT) and 517–548 (GKMT…SDTN).

This sequence belongs to the synembryn family.

Its subcellular location is the cytoplasm. It is found in the cell cortex. Chaperone that specifically binds and folds nascent G alpha proteins prior to G protein heterotrimer formation, promoting their stability and activity: folds GNAI1, GNAO1, GNA13 and GNAQ. Does not fold G(s) G-alpha proteins GNAS nor GNAL. Also acts as a guanine nucleotide exchange factor (GEF) for G alpha proteins by stimulating exchange of bound GDP for free GTP. This chain is Chaperone Ric-8A (ric8a), found in Danio rerio (Zebrafish).